A 443-amino-acid chain; its full sequence is tRNA-2-methylthio-N(6)-dimethylallyladenosine synthase (443 aa).

Residues 3–120 form the MTTase N-terminal domain; sequence SKLYIKTFGC…LPELIDARRR (118 aa). [4Fe-4S] cluster contacts are provided by C12, C49, C83, C157, C161, and C164. The 235-residue stretch at 143 to 377 folds into the Radical SAM core domain; sequence RTTGATAFVS…KIQRNAQMIS (235 aa). Residues 378-441 form the TRAM domain; it reads QSMVDTIQRV…SHTLRGEISD (64 aa).

It belongs to the methylthiotransferase family. MiaB subfamily. Monomer. [4Fe-4S] cluster serves as cofactor.

The protein localises to the cytoplasm. The enzyme catalyses N(6)-dimethylallyladenosine(37) in tRNA + (sulfur carrier)-SH + AH2 + 2 S-adenosyl-L-methionine = 2-methylsulfanyl-N(6)-dimethylallyladenosine(37) in tRNA + (sulfur carrier)-H + 5'-deoxyadenosine + L-methionine + A + S-adenosyl-L-homocysteine + 2 H(+). Functionally, catalyzes the methylthiolation of N6-(dimethylallyl)adenosine (i(6)A), leading to the formation of 2-methylthio-N6-(dimethylallyl)adenosine (ms(2)i(6)A) at position 37 in tRNAs that read codons beginning with uridine. The sequence is that of tRNA-2-methylthio-N(6)-dimethylallyladenosine synthase from Nitrosomonas eutropha (strain DSM 101675 / C91 / Nm57).